The sequence spans 416 residues: Cyclin-L1-1 (416 aa).

A disordered region spans residues 286-416 (KCTAGSANND…DSSKDRRRHH (131 aa)). Basic and acidic residues-rich tracts occupy residues 304 to 315 (PHEKATDSKKSG), 328 to 374 (SYER…DKLK), 384 to 393 (RLKDSGGHSD), and 401 to 410 (RDRDYRDSSK).

It belongs to the cyclin family. Cyclin L subfamily. Forms a complex with CDKG1. Interacts with MOS4 and associates with the spliceosome.

The protein resides in the nucleus. Functionally, cognate cyclin for CDKG1. Required for synapsis and male meiosis, and for the proper splicing of specific resistance (R) genes. Involved in regulation of DNA methylation and transcriptional silencing. This chain is Cyclin-L1-1 (CYCL1-1), found in Arabidopsis thaliana (Mouse-ear cress).